The chain runs to 301 residues: Lipoyl synthase (301 aa).

7 residues coordinate [4Fe-4S] cluster: cysteine 53, cysteine 58, cysteine 64, cysteine 79, cysteine 83, cysteine 86, and serine 290. One can recognise a Radical SAM core domain in the interval 65 to 279 (WSRKTATYML…RIYGKSIGFK (215 aa)).

Belongs to the radical SAM superfamily. Lipoyl synthase family. Requires [4Fe-4S] cluster as cofactor.

Its subcellular location is the cytoplasm. It carries out the reaction [[Fe-S] cluster scaffold protein carrying a second [4Fe-4S](2+) cluster] + N(6)-octanoyl-L-lysyl-[protein] + 2 oxidized [2Fe-2S]-[ferredoxin] + 2 S-adenosyl-L-methionine + 4 H(+) = [[Fe-S] cluster scaffold protein] + N(6)-[(R)-dihydrolipoyl]-L-lysyl-[protein] + 4 Fe(3+) + 2 hydrogen sulfide + 2 5'-deoxyadenosine + 2 L-methionine + 2 reduced [2Fe-2S]-[ferredoxin]. Its pathway is protein modification; protein lipoylation via endogenous pathway; protein N(6)-(lipoyl)lysine from octanoyl-[acyl-carrier-protein]: step 2/2. Catalyzes the radical-mediated insertion of two sulfur atoms into the C-6 and C-8 positions of the octanoyl moiety bound to the lipoyl domains of lipoate-dependent enzymes, thereby converting the octanoylated domains into lipoylated derivatives. The protein is Lipoyl synthase of Leptospira interrogans serogroup Icterohaemorrhagiae serovar copenhageni (strain Fiocruz L1-130).